A 73-amino-acid polypeptide reads, in one-letter code: Translation initiation factor IF-1 (73 aa).

Residues 1 to 73 (MAKKDGVIEI…TRGRIVYRYK (73 aa)) enclose the S1-like domain.

It belongs to the IF-1 family. As to quaternary structure, component of the 30S ribosomal translation pre-initiation complex which assembles on the 30S ribosome in the order IF-2 and IF-3, IF-1 and N-formylmethionyl-tRNA(fMet); mRNA recruitment can occur at any time during PIC assembly.

The protein resides in the cytoplasm. One of the essential components for the initiation of protein synthesis. Stabilizes the binding of IF-2 and IF-3 on the 30S subunit to which N-formylmethionyl-tRNA(fMet) subsequently binds. Helps modulate mRNA selection, yielding the 30S pre-initiation complex (PIC). Upon addition of the 50S ribosomal subunit IF-1, IF-2 and IF-3 are released leaving the mature 70S translation initiation complex. This chain is Translation initiation factor IF-1, found in Paenarthrobacter aurescens (strain TC1).